We begin with the raw amino-acid sequence, 226 residues long: Ribonuclease 3 (226 aa).

An RNase III domain is found at 6–128; the sequence is VNQLQKKLGY…LIGAIFLDSD (123 aa). Glutamate 41 is a binding site for Mg(2+). The active site involves aspartate 45. Residues aspartate 114 and glutamate 117 each coordinate Mg(2+). Residue glutamate 117 is part of the active site. Residues 155–225 form the DRBM domain; sequence DPKTRLQEYL…AEQALIQLEL (71 aa).

The protein belongs to the ribonuclease III family. Homodimer. Requires Mg(2+) as cofactor.

It localises to the cytoplasm. It carries out the reaction Endonucleolytic cleavage to 5'-phosphomonoester.. Its function is as follows. Digests double-stranded RNA. Involved in the processing of primary rRNA transcript to yield the immediate precursors to the large and small rRNAs (23S and 16S). Processes some mRNAs, and tRNAs when they are encoded in the rRNA operon. Processes pre-crRNA and tracrRNA of type II CRISPR loci if present in the organism. This Proteus mirabilis (strain HI4320) protein is Ribonuclease 3.